We begin with the raw amino-acid sequence, 336 residues long: Flap endonuclease 1 (336 aa).

An N-domain region spans residues 1–98 (MGADIGDLFE…AEIEERKKRR (98 aa)). 7 residues coordinate Mg(2+): Asp27, Asp80, Glu151, Glu153, Asp172, Asp174, and Asp235. The I-domain stretch occupies residues 115-256 (DAKKYAQAAG…KALNYIKTYG (142 aa)). Positions 328–336 (TQATLERWF) are interaction with PCNA.

Belongs to the XPG/RAD2 endonuclease family. FEN1 subfamily. In terms of assembly, interacts with PCNA. PCNA stimulates the nuclease activity without altering cleavage specificity. Requires Mg(2+) as cofactor.

Structure-specific nuclease with 5'-flap endonuclease and 5'-3' exonuclease activities involved in DNA replication and repair. During DNA replication, cleaves the 5'-overhanging flap structure that is generated by displacement synthesis when DNA polymerase encounters the 5'-end of a downstream Okazaki fragment. Binds the unpaired 3'-DNA end and kinks the DNA to facilitate 5' cleavage specificity. Cleaves one nucleotide into the double-stranded DNA from the junction in flap DNA, leaving a nick for ligation. Also involved in the base excision repair (BER) pathway. Acts as a genome stabilization factor that prevents flaps from equilibrating into structures that lead to duplications and deletions. Also possesses 5'-3' exonuclease activity on nicked or gapped double-stranded DNA. The polypeptide is Flap endonuclease 1 (Archaeoglobus fulgidus (strain ATCC 49558 / DSM 4304 / JCM 9628 / NBRC 100126 / VC-16)).